We begin with the raw amino-acid sequence, 560 residues long: Formate--tetrahydrofolate ligase (560 aa).

69 to 76 is a binding site for ATP; sequence TPAGEGKS.

The protein belongs to the formate--tetrahydrofolate ligase family.

The catalysed reaction is (6S)-5,6,7,8-tetrahydrofolate + formate + ATP = (6R)-10-formyltetrahydrofolate + ADP + phosphate. The protein operates within one-carbon metabolism; tetrahydrofolate interconversion. This Listeria monocytogenes serovar 1/2a (strain ATCC BAA-679 / EGD-e) protein is Formate--tetrahydrofolate ligase.